The following is a 288-amino-acid chain: Phosphatidylglycerol--prolipoprotein diacylglyceryl transferase (288 aa).

The next 4 membrane-spanning stretches (helical) occupy residues 18-38 (WSLR…LACL), 68-88 (FFIY…VIFY), 107-127 (GLSS…FSWI), and 135-155 (LTFL…AFFI). Residue Arg-156 coordinates a 1,2-diacyl-sn-glycero-3-phospho-(1'-sn-glycerol). 3 consecutive transmembrane segments (helical) span residues 193 to 213 (VQLY…FLSY), 222 to 242 (GYVT…AEYV), and 256 to 276 (LTIG…LLII).

Belongs to the Lgt family.

The protein resides in the cell inner membrane. The catalysed reaction is L-cysteinyl-[prolipoprotein] + a 1,2-diacyl-sn-glycero-3-phospho-(1'-sn-glycerol) = an S-1,2-diacyl-sn-glyceryl-L-cysteinyl-[prolipoprotein] + sn-glycerol 1-phosphate + H(+). It functions in the pathway protein modification; lipoprotein biosynthesis (diacylglyceryl transfer). Functionally, catalyzes the transfer of the diacylglyceryl group from phosphatidylglycerol to the sulfhydryl group of the N-terminal cysteine of a prolipoprotein, the first step in the formation of mature lipoproteins. This is Phosphatidylglycerol--prolipoprotein diacylglyceryl transferase from Chlamydia pneumoniae (Chlamydophila pneumoniae).